The primary structure comprises 306 residues: Follistatin-related protein 1 (306 aa).

Residues 1-18 (MWKRWLALALVAVAWVRA) form the signal peptide. Residues 28–51 (ICANVFCGAGRECAVTEKGEPTCL) enclose the Follistatin-like domain. 5 cysteine pairs are disulfide-bonded: Cys29–Cys40, Cys34–Cys50, Cys52–Cys82, Cys56–Cys75, and Cys64–Cys96. One can recognise a Kazal-like domain in the interval 46–98 (GEPTCLCIEQCKPHKRPVCGSNGKTYLNHCELHRDACLTGSKIQVDYDGHCKE). Residue Asn142 is glycosylated (N-linked (GlcNAc...) asparagine). One can recognise an EF-hand 1 domain in the interval 142–176 (NYSEILDKYFKNFDNGDSRLDSSEFLKFVEQNETA). Residue Ser163 is modified to Phosphoserine. 2 N-linked (GlcNAc...) asparagine glycosylation sites follow: Asn173 and Asn178. Residues 191–226 (LRGLCVDALIELSDENADWKLSFQEFLKCLNPSFNP) enclose the EF-hand 2 domain. One can recognise a VWFC domain in the interval 231 to 285 (CALEDETYADGAETEVDCNRCVCACGNWVCTAMTCDGKNQKGAQTQTEEEMTRYV).

In terms of assembly, homodimer. Interacts with SCN10A. Interacts with DIP2A; DIP2A may act as a cell surface receptor for FSTL1. Interacts with BMP4. Interacts with CD14; this interaction promotes TL4-mediated signaling cascade.

The protein resides in the secreted. Secreted glycoprotein that is involved in various physiological processes, such as angiogenesis, regulation of the immune response, cell proliferation and differentiation. Plays a role in the development of the central nervous system, skeletal system, lungs, and ureter. Promotes endothelial cell survival, migration and differentiation into network structures in an AKT-dependent manner. Also promotes survival of cardiac myocytes. Initiates various signaling cascades by activating different receptors on the cell surface such as DIP2A, TLR4 or BMP receptors. This Pongo abelii (Sumatran orangutan) protein is Follistatin-related protein 1 (FSTL1).